Here is a 123-residue protein sequence, read N- to C-terminus: MAKAIYVKFDVPKELADKAAEALEIARETGKVSKGTNEVTKAVERGVAQLVLIAEDVEPAEIVAHLPLLAEEKEIPYIYIPTKDELGAAAGLNVGTASSAIVEAGDAEDLIKEIIEKVEELKK.

Belongs to the eukaryotic ribosomal protein eL8 family. Part of the 50S ribosomal subunit. Probably part of the RNase P complex.

It is found in the cytoplasm. Its function is as follows. Multifunctional RNA-binding protein that recognizes the K-turn motif in ribosomal RNA, the RNA component of RNase P, box H/ACA, box C/D and box C'/D' sRNAs. The protein is Large ribosomal subunit protein eL8 of Methanothermobacter thermautotrophicus (strain ATCC 29096 / DSM 1053 / JCM 10044 / NBRC 100330 / Delta H) (Methanobacterium thermoautotrophicum).